A 163-amino-acid chain; its full sequence is Transcription elongation factor GreA (163 aa).

A coiled-coil region spans residues 12–73 (YEKIQKEFEA…ELSDLLARAQ (62 aa)).

This sequence belongs to the GreA/GreB family.

Functionally, necessary for efficient RNA polymerase transcription elongation past template-encoded arresting sites. The arresting sites in DNA have the property of trapping a certain fraction of elongating RNA polymerases that pass through, resulting in locked ternary complexes. Cleavage of the nascent transcript by cleavage factors such as GreA or GreB allows the resumption of elongation from the new 3'terminus. GreA releases sequences of 2 to 3 nucleotides. The sequence is that of Transcription elongation factor GreA from Nitratiruptor sp. (strain SB155-2).